The chain runs to 335 residues: Biotin synthase (335 aa).

Residues Y46–R274 enclose the Radical SAM core domain. The [4Fe-4S] cluster site is built by C61, C65, and C68. C105, C137, C197, and R269 together coordinate [2Fe-2S] cluster.

The protein belongs to the radical SAM superfamily. Biotin synthase family. In terms of assembly, homodimer. [4Fe-4S] cluster serves as cofactor. It depends on [2Fe-2S] cluster as a cofactor.

The catalysed reaction is (4R,5S)-dethiobiotin + (sulfur carrier)-SH + 2 reduced [2Fe-2S]-[ferredoxin] + 2 S-adenosyl-L-methionine = (sulfur carrier)-H + biotin + 2 5'-deoxyadenosine + 2 L-methionine + 2 oxidized [2Fe-2S]-[ferredoxin]. Its pathway is cofactor biosynthesis; biotin biosynthesis; biotin from 7,8-diaminononanoate: step 2/2. Functionally, catalyzes the conversion of dethiobiotin (DTB) to biotin by the insertion of a sulfur atom into dethiobiotin via a radical-based mechanism. In Prochlorococcus marinus (strain MIT 9515), this protein is Biotin synthase.